Reading from the N-terminus, the 188-residue chain is Peptidyl-tRNA hydrolase (188 aa).

Y17 contacts tRNA. Residue H22 is the Proton acceptor of the active site. Positions 65, 67, and 113 each coordinate tRNA.

Belongs to the PTH family. As to quaternary structure, monomer.

It localises to the cytoplasm. It catalyses the reaction an N-acyl-L-alpha-aminoacyl-tRNA + H2O = an N-acyl-L-amino acid + a tRNA + H(+). In terms of biological role, hydrolyzes ribosome-free peptidyl-tRNAs (with 1 or more amino acids incorporated), which drop off the ribosome during protein synthesis, or as a result of ribosome stalling. Its function is as follows. Catalyzes the release of premature peptidyl moieties from peptidyl-tRNA molecules trapped in stalled 50S ribosomal subunits, and thus maintains levels of free tRNAs and 50S ribosomes. In Mycoplasma pneumoniae (strain ATCC 29342 / M129 / Subtype 1) (Mycoplasmoides pneumoniae), this protein is Peptidyl-tRNA hydrolase.